The primary structure comprises 196 residues: ATP-dependent Clp protease proteolytic subunit (196 aa).

Catalysis depends on S101, which acts as the Nucleophile. H126 is an active-site residue.

It belongs to the peptidase S14 family. As to quaternary structure, component of the chloroplastic Clp protease core complex.

It is found in the plastid. Its subcellular location is the chloroplast stroma. It carries out the reaction Hydrolysis of proteins to small peptides in the presence of ATP and magnesium. alpha-casein is the usual test substrate. In the absence of ATP, only oligopeptides shorter than five residues are hydrolyzed (such as succinyl-Leu-Tyr-|-NHMec, and Leu-Tyr-Leu-|-Tyr-Trp, in which cleavage of the -Tyr-|-Leu- and -Tyr-|-Trp bonds also occurs).. Functionally, cleaves peptides in various proteins in a process that requires ATP hydrolysis. Has a chymotrypsin-like activity. Plays a major role in the degradation of misfolded proteins. The polypeptide is ATP-dependent Clp protease proteolytic subunit (Citrus sinensis (Sweet orange)).